A 210-amino-acid polypeptide reads, in one-letter code: Large ribosomal subunit protein uL3 (210 aa).

The segment at 125–151 is disordered; the sequence is HGFGGGPRTHGQSDRLRAPGSIGAGTD.

Belongs to the universal ribosomal protein uL3 family. In terms of assembly, part of the 50S ribosomal subunit. Forms a cluster with proteins L14 and L19.

Its function is as follows. One of the primary rRNA binding proteins, it binds directly near the 3'-end of the 23S rRNA, where it nucleates assembly of the 50S subunit. This is Large ribosomal subunit protein uL3 from Roseiflexus sp. (strain RS-1).